We begin with the raw amino-acid sequence, 1081 residues long: Probable sucrose-phosphate synthase 2 (1081 aa).

Disordered regions lie at residues 116–152 (EQGR…PRGN), 239–267 (EPTE…EDLG), and 760–780 (IKRQ…GDVP). Acidic residues predominate over residues 256–267 (EPEEEEEEEDLG).

This sequence belongs to the glycosyltransferase 1 family. Homodimer or homotetramer.

The catalysed reaction is beta-D-fructose 6-phosphate + UDP-alpha-D-glucose = sucrose 6(F)-phosphate + UDP + H(+). Its pathway is glycan biosynthesis; sucrose biosynthesis; sucrose from D-fructose 6-phosphate and UDP-alpha-D-glucose: step 1/2. Its activity is regulated as follows. Activity is regulated by phosphorylation and moderated by concentration of metabolites and light. Its function is as follows. Plays a role in photosynthetic sucrose synthesis by catalyzing the rate-limiting step of sucrose biosynthesis from UDP-glucose and fructose- 6-phosphate. Involved in the regulation of carbon partitioning in the leaves of plants. May regulate the synthesis of sucrose and therefore play a major role as a limiting factor in the export of photoassimilates out of the leaf. Plays a role for sucrose availability that is essential for plant growth and fiber elongation. This Craterostigma plantagineum (Blue gem) protein is Probable sucrose-phosphate synthase 2 (SPS2).